The following is a 483-amino-acid chain: Aspartyl/glutamyl-tRNA(Asn/Gln) amidotransferase subunit B (483 aa).

This sequence belongs to the GatB/GatE family. GatB subfamily. In terms of assembly, heterotrimer of A, B and C subunits.

The enzyme catalyses L-glutamyl-tRNA(Gln) + L-glutamine + ATP + H2O = L-glutaminyl-tRNA(Gln) + L-glutamate + ADP + phosphate + H(+). The catalysed reaction is L-aspartyl-tRNA(Asn) + L-glutamine + ATP + H2O = L-asparaginyl-tRNA(Asn) + L-glutamate + ADP + phosphate + 2 H(+). In terms of biological role, allows the formation of correctly charged Asn-tRNA(Asn) or Gln-tRNA(Gln) through the transamidation of misacylated Asp-tRNA(Asn) or Glu-tRNA(Gln) in organisms which lack either or both of asparaginyl-tRNA or glutaminyl-tRNA synthetases. The reaction takes place in the presence of glutamine and ATP through an activated phospho-Asp-tRNA(Asn) or phospho-Glu-tRNA(Gln). This Anaeromyxobacter sp. (strain Fw109-5) protein is Aspartyl/glutamyl-tRNA(Asn/Gln) amidotransferase subunit B.